A 193-amino-acid polypeptide reads, in one-letter code: MIWLRSSVVLLIFLTLITGVAYPLLATGLSELMFPYQAQGSMVKQDGQTVGSELIGQPFTKAIYFQGRPSATVDYPYNTLSSGGSNLATTNPILDDEIKRRVEQLRQFNRQPDIPVPVDLVTASASGLDPHISPAAADFQAQRVADARHLPIKVIKQLIRDNIEHPPSEFLGEPVINVLKLNLALDNLPEKKQ.

A helical transmembrane segment spans residues 8–28 (VVLLIFLTLITGVAYPLLATG).

The protein belongs to the KdpC family. As to quaternary structure, the system is composed of three essential subunits: KdpA, KdpB and KdpC.

Its subcellular location is the cell inner membrane. Functionally, part of the high-affinity ATP-driven potassium transport (or Kdp) system, which catalyzes the hydrolysis of ATP coupled with the electrogenic transport of potassium into the cytoplasm. This subunit acts as a catalytic chaperone that increases the ATP-binding affinity of the ATP-hydrolyzing subunit KdpB by the formation of a transient KdpB/KdpC/ATP ternary complex. This chain is Potassium-transporting ATPase KdpC subunit, found in Photorhabdus laumondii subsp. laumondii (strain DSM 15139 / CIP 105565 / TT01) (Photorhabdus luminescens subsp. laumondii).